Reading from the N-terminus, the 457-residue chain is Carboxypeptidase N catalytic chain (457 aa).

An N-terminal signal peptide occupies residues 1 to 23; it reads MPDLPSAFLPLLLLSKFVTPVTF. Positions 24-338 constitute a Peptidase M14 domain; the sequence is RHHRYDDLVR…EALIQFLEQV (315 aa). Cys42 and Cys104 are oxidised to a cystine. Residues His86, Glu89, and His216 each coordinate Zn(2+). Cys271 and Cys311 are disulfide-bonded. Glu308 (proton donor/acceptor) is an active-site residue. O-linked (GalNAc...) threonine glycans are attached at residues Thr400, Thr402, and Thr409. Residues 418-457 form a disordered region; it reads SSSQVYPVQRAPGRGQGGRAKQPRTSRKKDPATKRHRGPA.

The protein belongs to the peptidase M14 family. Tetramer of two catalytic chains and two glycosylated inactive chains. The cofactor is Zn(2+). As to expression, mainly expressed in liver. Also detected in lung, stomach, intestine, spleen and kidney.

It localises to the secreted. It is found in the extracellular space. It carries out the reaction Release of a C-terminal basic amino acid, preferentially lysine.. In terms of biological role, protects the body from potent vasoactive and inflammatory peptides containing C-terminal Arg or Lys (such as kinins or anaphylatoxins) which are released into the circulation. This is Carboxypeptidase N catalytic chain (Cpn1) from Mus musculus (Mouse).